The sequence spans 255 residues: Small ribosomal subunit protein uS2 (255 aa).

Belongs to the universal ribosomal protein uS2 family.

The protein is Small ribosomal subunit protein uS2 of Streptococcus pyogenes serotype M3 (strain ATCC BAA-595 / MGAS315).